The following is a 195-amino-acid chain: Cysteine/O-acetylserine efflux protein (195 aa).

Over 1–7 (MTPTLLS) the chain is Periplasmic. The helical transmembrane segment at 8–28 (AFWTYTLITAMTPGPNNILAL) threads the bilayer. Topologically, residues 29-46 (SSATSHGFRQSTRVLAGM) are cytoplasmic. Residues 47 to 67 (SLGFLIVMLLCAGISFSLAVI) traverse the membrane as a helical segment. Topologically, residues 68 to 69 (DP) are periplasmic. A helical transmembrane segment spans residues 70 to 90 (AAVHLLSWAGAAYIVWLAWKI). The Cytoplasmic portion of the chain corresponds to 91-104 (ATSPTKEDGLQAKP). The chain crosses the membrane as a helical span at residues 105 to 125 (ISFWASFALQFVNVKIILYGV). Residues 126–141 (TALSTFVLPQTQALSW) lie on the Periplasmic side of the membrane. Residues 142 to 162 (VVGVSVLLAMIGTFGNVCWAL) traverse the membrane as a helical segment. Over 163-176 (AGHLFQRLFRQYGR) the chain is Cytoplasmic. A helical membrane pass occupies residues 177-194 (QLNIVLALLLIYCAVRIF). Position 195 (Tyr-195) is a topological domain, periplasmic.

This sequence belongs to the Rht family.

It localises to the cell inner membrane. It catalyses the reaction O-acetyl-L-serine(in) = O-acetyl-L-serine(out). It carries out the reaction L-cysteine(in) = L-cysteine(out). Exporter of O-acetylserine (OAS) and cysteine. The polypeptide is Cysteine/O-acetylserine efflux protein (eamB) (Escherichia coli O139:H28 (strain E24377A / ETEC)).